Here is a 581-residue protein sequence, read N- to C-terminus: Dehydrocurvularin exporter (581 aa).

Residues 1–10 show a composition bias toward polar residues; that stretch reads MTDSPSLESN. The segment at 1 to 47 is disordered; the sequence is MTDSPSLESNNKSDMDTPRPPASSHDEHDAAESVSEKQDSATTSPTG. A glycan (N-linked (GlcNAc...) asparagine) is linked at asparagine 11. The span at 24 to 39 shows a compositional bias: basic and acidic residues; it reads SHDEHDAAESVSEKQD. 14 consecutive transmembrane segments (helical) span residues 61-81, 96-116, 126-146, 159-179, 184-204, 215-235, 251-271, 288-308, 330-350, 363-383, 392-412, 424-444, 456-476, and 527-547; these read LVMF…GIIA, DVGW…PLWG, WVYL…AAAP, GWGA…VAPP, LLIG…PVIG, WCFW…LLFL, IILN…VCLT, VIAT…VEWL, IFCL…PIYF, VNTL…GGAI, YELA…ILDV, VLFG…VQGF, IMVM…QSLF, and VFAF…LIPF. Positions 552–581 are disordered; the sequence is DHEKKPSKDAMASDEVKASEEVQQEKKVTV. The segment covering 565–581 has biased composition (basic and acidic residues); it reads DEVKASEEVQQEKKVTV.

It belongs to the major facilitator superfamily. TCR/Tet family.

The protein localises to the cell membrane. Its function is as follows. Efflux pump that is probably involved in the export of dehydrocurvularin. In Alternaria cinerariae, this protein is Dehydrocurvularin exporter.